A 212-amino-acid chain; its full sequence is Peptide methionine sulfoxide reductase MsrA (212 aa).

Cysteine 52 is an active-site residue.

Belongs to the MsrA Met sulfoxide reductase family.

The enzyme catalyses L-methionyl-[protein] + [thioredoxin]-disulfide + H2O = L-methionyl-(S)-S-oxide-[protein] + [thioredoxin]-dithiol. The catalysed reaction is [thioredoxin]-disulfide + L-methionine + H2O = L-methionine (S)-S-oxide + [thioredoxin]-dithiol. Has an important function as a repair enzyme for proteins that have been inactivated by oxidation. Catalyzes the reversible oxidation-reduction of methionine sulfoxide in proteins to methionine. The protein is Peptide methionine sulfoxide reductase MsrA of Shigella boydii serotype 4 (strain Sb227).